A 362-amino-acid polypeptide reads, in one-letter code: Probable protein phosphatase 2C 11 (362 aa).

Residues 23 to 329 (KLGLSSMQGW…DNMTMVLVQF (307 aa)) enclose the PPM-type phosphatase domain. Mn(2+) is bound by residues Asp57, Gly58, Asp272, and Asp320.

Belongs to the PP2C family. The cofactor is Mg(2+). Mn(2+) is required as a cofactor.

The enzyme catalyses O-phospho-L-seryl-[protein] + H2O = L-seryl-[protein] + phosphate. It catalyses the reaction O-phospho-L-threonyl-[protein] + H2O = L-threonyl-[protein] + phosphate. In Oryza sativa subsp. japonica (Rice), this protein is Probable protein phosphatase 2C 11.